Here is an 885-residue protein sequence, read N- to C-terminus: Protein arg11, mitochondrial (885 aa).

The N-terminal 59 residues, 1–59, are a transit peptide targeting the mitochondrion; it reads MLIELQQIVKSGLVRNGAKHCTKRSLLCSNASVIASKRFQGSFAPGQQQPLNPLAKPIE. In terms of domain architecture, N-acetyltransferase spans 346 to 499; the sequence is FVINKHDSLD…SDKPFADAII (154 aa). Residues 503-523 are compositionally biased toward low complexity; that stretch reads STKPPTASSTTNNPSSSQINQ. The tract at residues 503–532 is disordered; sequence STKPPTASSTTNNPSSSQINQKRSYSTSSL. C703 is an active-site residue.

It in the N-terminal section; belongs to the acetylglutamate kinase family. In the C-terminal section; belongs to the NAGSA dehydrogenase family. Post-translationally, the protein precursor is probably cleaved into the two biologically active enzymes, the kinase and the reductase.

It is found in the mitochondrion. The catalysed reaction is N-acetyl-L-glutamate 5-semialdehyde + phosphate + NADP(+) = N-acetyl-L-glutamyl 5-phosphate + NADPH + H(+). The enzyme catalyses N-acetyl-L-glutamate + ATP = N-acetyl-L-glutamyl 5-phosphate + ADP. The protein operates within amino-acid biosynthesis; L-arginine biosynthesis; N(2)-acetyl-L-ornithine from L-glutamate: step 2/4. It participates in amino-acid biosynthesis; L-arginine biosynthesis; N(2)-acetyl-L-ornithine from L-glutamate: step 3/4. Its activity is regulated as follows. The kinase activity is inhibited by arginine. This chain is Protein arg11, mitochondrial (arg11), found in Schizosaccharomyces pombe (strain 972 / ATCC 24843) (Fission yeast).